Here is a 213-residue protein sequence, read N- to C-terminus: GrpE protein homolog, mitochondrial (213 aa).

Residues 35–55 (STEKQPEEATEQKATESSPEV) form a disordered region. The segment covering 38–55 (KQPEEATEQKATESSPEV) has biased composition (basic and acidic residues).

This sequence belongs to the GrpE family. As to quaternary structure, probable component of the PAM complex at least composed of a mitochondrial HSP70 protein, Roe1, TIM44, blp/TIM16 and TIM14.

The protein resides in the mitochondrion matrix. Functionally, essential component of the PAM complex, a complex required for the translocation of transit peptide-containing proteins from the inner membrane into the mitochondrial matrix in an ATP-dependent manner. Seems to control the nucleotide-dependent binding of mitochondrial HSP70 to substrate proteins. The chain is GrpE protein homolog, mitochondrial (Roe1) from Drosophila melanogaster (Fruit fly).